Here is a 105-residue protein sequence, read N- to C-terminus: Large ribosomal subunit protein bL21 (105 aa).

Belongs to the bacterial ribosomal protein bL21 family. As to quaternary structure, part of the 50S ribosomal subunit. Contacts protein L20.

This protein binds to 23S rRNA in the presence of protein L20. This is Large ribosomal subunit protein bL21 from Blochmanniella pennsylvanica (strain BPEN).